The sequence spans 608 residues: UvrABC system protein C (608 aa).

In terms of domain architecture, GIY-YIG spans 16–94 (NRPGVYRMFD…IKEWRPPYNI (79 aa)). The UVR domain occupies 204–239 (NALADELNVGMEQAAMRLDFEKAAELRDQVAILRRV).

Belongs to the UvrC family. Interacts with UvrB in an incision complex.

The protein localises to the cytoplasm. The UvrABC repair system catalyzes the recognition and processing of DNA lesions. UvrC both incises the 5' and 3' sides of the lesion. The N-terminal half is responsible for the 3' incision and the C-terminal half is responsible for the 5' incision. This is UvrABC system protein C from Pseudomonas aeruginosa (strain ATCC 15692 / DSM 22644 / CIP 104116 / JCM 14847 / LMG 12228 / 1C / PRS 101 / PAO1).